A 140-amino-acid polypeptide reads, in one-letter code: MKMFKSLRLLPHIVSPFQKCYSTDLISLVGVPRVKITKGQNRYLLVNIHTHGFTKYGRVIVRGADVDNHLAVFDSILEELEPEGICAKILGGGRILNEAENKKIKIYGTSRTFGGADHTRTRNILQAWTTYKDFKITVKQ.

Position 42 (Arg-42) interacts with substrate. The Proton acceptor role is filled by His-69. Position 110–112 (110–112 (SRT)) interacts with substrate.

Belongs to the janus family. Germline cells of adult males.

Its function is as follows. JanA and janB regulate somatic sex differentiation. The chain is Sex-regulated protein janus-B (janB) from Drosophila melanogaster (Fruit fly).